Consider the following 178-residue polypeptide: Arginine repressor (178 aa).

The disordered stretch occupies residues 1–20 (MTEAQEPEYGGPSVPQTRTA).

The protein belongs to the ArgR family.

Its subcellular location is the cytoplasm. It participates in amino-acid biosynthesis; L-arginine biosynthesis [regulation]. Its function is as follows. Regulates arginine biosynthesis genes. The chain is Arginine repressor from Streptomyces griseus subsp. griseus (strain JCM 4626 / CBS 651.72 / NBRC 13350 / KCC S-0626 / ISP 5235).